Reading from the N-terminus, the 122-residue chain is 5'-AMP-activated protein kinase subunit beta-1 (122 aa).

Ser5, Ser61, Ser66, and Ser73 each carry phosphoserine. The tract at residues 33 to 122 (EVNDKASAQA…TVNNIIQVKK (90 aa)) is glycogen-binding domain. Phosphothreonine is present on Thr113.

Belongs to the 5'-AMP-activated protein kinase beta subunit family. AMPK is a heterotrimer of an alpha catalytic subunit (PRKAA1 or PRKAA2), a beta (PRKAB1 or PRKAB2) and a gamma non-catalytic subunits (PRKAG1, PRKAG2 or PRKAG3). Interacts with FNIP1 and FNIP2. Phosphorylated when associated with the catalytic subunit (PRKAA1 or PRKAA2). Phosphorylated by ULK1; leading to negatively regulate AMPK activity and suggesting the existence of a regulatory feedback loop between ULK1 and AMPK.

In terms of biological role, non-catalytic subunit of AMP-activated protein kinase (AMPK), an energy sensor protein kinase that plays a key role in regulating cellular energy metabolism. In response to reduction of intracellular ATP levels, AMPK activates energy-producing pathways and inhibits energy-consuming processes: inhibits protein, carbohydrate and lipid biosynthesis, as well as cell growth and proliferation. AMPK acts via direct phosphorylation of metabolic enzymes, and by longer-term effects via phosphorylation of transcription regulators. Also acts as a regulator of cellular polarity by remodeling the actin cytoskeleton; probably by indirectly activating myosin. Beta non-catalytic subunit acts as a scaffold on which the AMPK complex assembles, via its C-terminus that bridges alpha (PRKAA1 or PRKAA2) and gamma subunits (PRKAG1, PRKAG2 or PRKAG3). The polypeptide is 5'-AMP-activated protein kinase subunit beta-1 (PRKAB1) (Sus scrofa (Pig)).